The sequence spans 962 residues: Ubiquitin carboxyl-terminal hydrolase 4 (962 aa).

The DUSP domain occupies 11–122 (PDVETQKTEL…GQQPIVRKVV (112 aa)). The necessary for interaction with SART3 stretch occupies residues 27–216 (TLQRGAQWYL…LYQGQVLVIE (190 aa)). Residues 133–141 (VEVYLLELK) carry the Nuclear export signal motif. The 85-residue stretch at 142-226 (LCENSDPTNV…PQNEDGTWPR (85 aa)) folds into the Ubiquitin-like 1 domain. Positions 220 to 249 (EDGTWPRQSLQSKSSTAPSRNFTTSSKPSA) are disordered. Polar residues predominate over residues 225–249 (PRQSLQSKSSTAPSRNFTTSSKPSA). The segment at 229–295 (LQSKSSTAPS…SYNCQEPPSP (67 aa)) is required for USP4 activation by providing conformational flexibility between the DUSP and catalytic domains. The USP domain occupies 302–922 (CGLGNLGNTC…AAYVLFYQRR (621 aa)). Catalysis depends on Cys-311, which acts as the Nucleophile. Positions 384 to 386 (PQF) are regulates ubiquitin dissociation. Residues 405-407 (LHE) are necessary for interaction with RBL2. Ser-445 bears the Phosphoserine mark. Positions 459–463 (LVCPE) are necessary for interaction with RB1 and RBL2. Zn(2+) is bound by residues Cys-461 and Cys-464. The Ubiquitin-like 2 domain maps to 483 to 571 (LKKDRIMEVF…IFVYEVCNTS (89 aa)). Residues 485–774 (KDRIMEVFLV…SQPQKKKKAA (290 aa)) form an interacts with DUSP and ubiquitin-like 1 domains and is required for USP4 activation region. The tract at residues 638–699 (EFLSSPLEPG…SESAQKVKGQ (62 aa)) is disordered. The residue at position 655 (Ser-655) is a Phosphoserine. The span at 657 to 666 (EGDEEEEMDH) shows a compositional bias: acidic residues. Ser-675 and Ser-680 each carry phosphoserine. The Nuclear localization signal signature appears at 766–771 (QPQKKK). Zn(2+) is bound by residues Cys-798 and Cys-801. Catalysis depends on His-880, which acts as the Proton acceptor. Low complexity predominate over residues 928–937 (STSSLGSFPG). Positions 928–962 (STSSLGSFPGSDGGVKLSSSHQGMGDEEAYNMDTN) are disordered. Over residues 952–962 (GDEEAYNMDTN) the composition is skewed to acidic residues.

It belongs to the peptidase C19 family. USP4 subfamily. As to quaternary structure, interacts with RB1 (both dephosphorylated and hypophosphorylated forms). Interacts with RBL1 and RBL2. Interacts with ADORA2A (via cytoplasmic C-terminus); the interaction is direct. Interacts with SART3; recruits USP4 to its substrate PRPF3. Phosphorylated at Ser-445 by PKB/AKT1 in response to EGF stimulus, promoting its ability deubiquitinate RHEB. In terms of processing, monoubiquitinated by TRIM21. Ubiquitination does not lead to its proteasomal degradation. Autodeubiquitinated. As to expression, expressed in brain, kidney, liver and spleen (at protein level).

The protein resides in the cytoplasm. Its subcellular location is the nucleus. The enzyme catalyses Thiol-dependent hydrolysis of ester, thioester, amide, peptide and isopeptide bonds formed by the C-terminal Gly of ubiquitin (a 76-residue protein attached to proteins as an intracellular targeting signal).. With respect to regulation, the completion of the deubiquitinase reaction is mediated by the DUSP and ubiquitin-like 1 domains which promotes the release of ubiquitin from the catalytic site enabling subsequent reactions to occur. Deubiquitinating enzyme that removes conjugated ubiquitin from target proteins. Deubiquitinates PDPK1. Deubiquitinates TRIM21. Deubiquitinates receptor ADORA2A which increases the amount of functional receptor at the cell surface. Deubiquitinates HAS2. Deubiquitinates RHEB in response to EGF signaling, promoting mTORC1 signaling. May regulate mRNA splicing through deubiquitination of the U4 spliceosomal protein PRPF3. This may prevent its recognition by the U5 component PRPF8 thereby destabilizing interactions within the U4/U6.U5 snRNP. May also play a role in the regulation of quality control in the ER. The sequence is that of Ubiquitin carboxyl-terminal hydrolase 4 (Usp4) from Mus musculus (Mouse).